Here is a 504-residue protein sequence, read N- to C-terminus: Maturase K (504 aa).

It belongs to the intron maturase 2 family. MatK subfamily.

The protein resides in the plastid. It localises to the chloroplast. Usually encoded in the trnK tRNA gene intron. Probably assists in splicing its own and other chloroplast group II introns. In Adenostoma fasciculatum (Chamise), this protein is Maturase K.